Consider the following 151-residue polypeptide: Large ribosomal subunit protein uL13 (151 aa).

Residues 129–151 (PTHPHDAQKPKELNINTIPGAES) are disordered. The span at 131 to 140 (HPHDAQKPKE) shows a compositional bias: basic and acidic residues.

Belongs to the universal ribosomal protein uL13 family. Part of the 50S ribosomal subunit.

Its function is as follows. This protein is one of the early assembly proteins of the 50S ribosomal subunit, although it is not seen to bind rRNA by itself. It is important during the early stages of 50S assembly. This chain is Large ribosomal subunit protein uL13, found in Trichormus variabilis (strain ATCC 29413 / PCC 7937) (Anabaena variabilis).